The following is a 118-amino-acid chain: Myotrophin (118 aa).

The residue at position 2 (cysteine 2) is an N-acetylcysteine. The ANK 1 repeat unit spans residues 2–30; that stretch reads CDKEFMWALKNGDLDEVKDYVAKGEDVNR. Residues lysine 4, lysine 11, and lysine 24 each carry the N6-acetyllysine modification. Position 31 is a phosphothreonine (threonine 31). ANK repeat units lie at residues 34–66 and 67–99; these read GGRK…APDK and HHIT…VKGP.

This sequence belongs to the myotrophin family. Interacts with RELA. Interacts with the heterodimer formed by CAPZA1 and CAPZB.

The protein localises to the cytoplasm. It is found in the nucleus. It localises to the perinuclear region. Promotes dimerization of NF-kappa-B subunits and regulates NF-kappa-B transcription factor activity. Promotes growth of cardiomyocytes, but not cardiomyocyte proliferation. Promotes cardiac muscle hypertrophy. Plays a role in the regulation of the growth of actin filaments. Inhibits the activity of the F-actin-capping protein complex formed by the CAPZA1 and CAPZB heterodimer. The polypeptide is Myotrophin (MTPN) (Bos taurus (Bovine)).